The chain runs to 209 residues: Leucyl/phenylalanyl-tRNA--protein transferase (209 aa).

Belongs to the L/F-transferase family.

The protein resides in the cytoplasm. It carries out the reaction N-terminal L-lysyl-[protein] + L-leucyl-tRNA(Leu) = N-terminal L-leucyl-L-lysyl-[protein] + tRNA(Leu) + H(+). The enzyme catalyses N-terminal L-arginyl-[protein] + L-leucyl-tRNA(Leu) = N-terminal L-leucyl-L-arginyl-[protein] + tRNA(Leu) + H(+). The catalysed reaction is L-phenylalanyl-tRNA(Phe) + an N-terminal L-alpha-aminoacyl-[protein] = an N-terminal L-phenylalanyl-L-alpha-aminoacyl-[protein] + tRNA(Phe). Functionally, functions in the N-end rule pathway of protein degradation where it conjugates Leu, Phe and, less efficiently, Met from aminoacyl-tRNAs to the N-termini of proteins containing an N-terminal arginine or lysine. This Paramagnetospirillum magneticum (strain ATCC 700264 / AMB-1) (Magnetospirillum magneticum) protein is Leucyl/phenylalanyl-tRNA--protein transferase.